Here is a 491-residue protein sequence, read N- to C-terminus: Protein DETOXIFICATION 28 (491 aa).

A run of 12 helical transmembrane segments spans residues 47 to 67, 77 to 97, 127 to 147, 160 to 180, 192 to 212, 228 to 248, 272 to 292, 302 to 322, 352 to 372, 387 to 407, 414 to 434, and 444 to 464; these read IVGPAIFTRVTTNLIFVITQA, LAAISIVNNVIIGFNYSLFIG, IVLFLFSILLLPMYIFATPIL, SGIISVWAIPTHFSFAFFFPI, VIAISSGVSLVVHIFVCWLFV, VSWWLNVFILFTYTTCGGCPL, GIMVCLENWYYRMLIVMTGNL, MSICMSINGLEMMVPLAFFAG, IIGIIISVLIYFLLDQIGWMF, ILLSFAILLNSVQPVLSGVAV, LVAFINLGCYYFIGLPLGIVM, and GIWAGMIFGGTMVQTLILIFI.

Belongs to the multi antimicrobial extrusion (MATE) (TC 2.A.66.1) family.

It localises to the membrane. In Arabidopsis thaliana (Mouse-ear cress), this protein is Protein DETOXIFICATION 28.